The primary structure comprises 426 residues: 10-deoxymethynolide desosaminyltransferase (426 aa).

The protein belongs to the glycosyltransferase 28 family. As to quaternary structure, forms a complex with DesVIII.

It catalyses the reaction 10-deoxymethynolide + dTDP-alpha-D-desosamine = 10-deoxymethymycin + dTDP + H(+). Its pathway is antibiotic biosynthesis. Functionally, involved in the biosynthesis of the macrolide antibiotics methymycin, neomethymycin, narbomycin, and pikromycin. Catalyzes the attachment of dTDP-D-desosamine onto 12- and 14-membered macrolactone rings 10-deoxymethynolide and narbonolide to produce 10-deoxymethymycin (YC-17) and narbomycin. DesVII is unique among glycosyltransferases in that it requires an additional protein component, DesVIII, for its activity. DesVII can recognize and process not only cyclic substrates of different ring size, but also a variety of linear substrates albeit with reduced, but measurable activities. Both L-sugars and D-sugars are recognized as substrates and variant substitutions at C-3 and C-4 are tolerated, but deoxygenation at C-6 is required. The polypeptide is 10-deoxymethynolide desosaminyltransferase (Streptomyces venezuelae).